We begin with the raw amino-acid sequence, 359 residues long: Peptide chain release factor 1 (359 aa).

At Gln234 the chain carries N5-methylglutamine.

The protein belongs to the prokaryotic/mitochondrial release factor family. Methylated by PrmC. Methylation increases the termination efficiency of RF1.

The protein resides in the cytoplasm. In terms of biological role, peptide chain release factor 1 directs the termination of translation in response to the peptide chain termination codons UAG and UAA. This chain is Peptide chain release factor 1, found in Clavibacter michiganensis subsp. michiganensis (strain NCPPB 382).